A 119-amino-acid chain; its full sequence is UPF0102 protein FN1370 (119 aa).

Belongs to the UPF0102 family.

This chain is UPF0102 protein FN1370, found in Fusobacterium nucleatum subsp. nucleatum (strain ATCC 25586 / DSM 15643 / BCRC 10681 / CIP 101130 / JCM 8532 / KCTC 2640 / LMG 13131 / VPI 4355).